A 434-amino-acid chain; its full sequence is MESKPFSLPSQSATVLIGTQFGDEGKGKLVDYLSDQYDIVVRYQGGANAGHTICFDGKSVVLHLIPSGIFNEKCVCVIGNGVVIDPVALLEEIATVEALGYEVKGRLFISHNAHLIMPYHKRLDSLSESAQGDQKIGTTGRGIGPSYEDKFARKGIRVVDLLNAEVLQEKLRENLAQKNRLFTTIYDGEEIDVESMVREYEEFDKIIDPYITNTQLYLNRQLREGRTVLLEGAQGSLLDVDHGTYPFVTSSNPTSGGACTGSGIAPNHIGKVIGVCKAYMTRVGNGAFPTELFDETGEELGRVGHEFGATTGRKRRCGWIDLVAMRYAVAVNGITELALTKLDVLDGFEEIQVCNSYTLDGKEIFDFPTDHETLSRVKPVLTPMKGWMASNADARNFEEMRPAAKQFVEFLENELEVPVTFISVGPGRNETVFR.

Residues 22–28 (GDEGKGK) and 50–52 (GHT) each bind GTP. Residue Asp-23 is the Proton acceptor of the active site. 2 residues coordinate Mg(2+): Asp-23 and Gly-50. IMP-binding positions include 23–26 (DEGK), 48–51 (NAGH), Thr-139, Arg-153, Gln-234, Thr-249, and Arg-313. The active-site Proton donor is the His-51. Residue 309-315 (ATTGRKR) coordinates substrate. Residues Arg-315, 341–343 (KLD), and 423–425 (SVG) each bind GTP.

Belongs to the adenylosuccinate synthetase family. Homodimer. It depends on Mg(2+) as a cofactor.

The protein resides in the cytoplasm. The enzyme catalyses IMP + L-aspartate + GTP = N(6)-(1,2-dicarboxyethyl)-AMP + GDP + phosphate + 2 H(+). It participates in purine metabolism; AMP biosynthesis via de novo pathway; AMP from IMP: step 1/2. Plays an important role in the de novo pathway of purine nucleotide biosynthesis. Catalyzes the first committed step in the biosynthesis of AMP from IMP. The polypeptide is Adenylosuccinate synthetase (Chlorobium phaeovibrioides (strain DSM 265 / 1930) (Prosthecochloris vibrioformis (strain DSM 265))).